Consider the following 81-residue polypeptide: Acyl carrier protein (81 aa).

In terms of domain architecture, Carrier spans A2 to Q80. S40 bears the O-(pantetheine 4'-phosphoryl)serine mark.

The protein belongs to the acyl carrier protein (ACP) family. 4'-phosphopantetheine is transferred from CoA to a specific serine of apo-ACP by AcpS. This modification is essential for activity because fatty acids are bound in thioester linkage to the sulfhydryl of the prosthetic group.

It localises to the cytoplasm. Its pathway is lipid metabolism; fatty acid biosynthesis. Carrier of the growing fatty acid chain in fatty acid biosynthesis. In Paenarthrobacter aurescens (strain TC1), this protein is Acyl carrier protein.